Here is a 1850-residue protein sequence, read N- to C-terminus: Vitellogenin-2 (1850 aa).

The first 15 residues, 1 to 15 (MRGIILALVLTLVGS), serve as a signal peptide directing secretion. Residues 24-662 (FNSRRSYLYN…SPRTMFPSAI (639 aa)) form the Vitellogenin domain. The N-linked (GlcNAc...) asparagine glycan is linked to asparagine 604. The disordered stretch occupies residues 935–984 (DAPLDVTEEPFQTSERASREHFAMQGPDSMPRKQSHSSREDLRRSTGKRA). Asparagine 1094 carries N-linked (GlcNAc...) asparagine glycosylation. 2 disordered regions span residues 1115-1313 (GTEP…SSSS) and 1338-1362 (EFPKRKLPGDRATSRYSSTRSSHDT). Residues 1122–1143 (TSSSSSSASSTATSSSSSSASS) show a composition bias toward low complexity. Basic and acidic residues predominate over residues 1156–1165 (DQVKQARNKD). Positions 1167–1266 (SSSSRSSKSS…SRSSSSSSKS (100 aa)) are enriched in low complexity. 2 N-linked (GlcNAc...) asparagine glycosylation sites follow: asparagine 1177 and asparagine 1188. The segment covering 1267–1277 (SSHHSHSHHSG) has biased composition (basic residues). Residues 1278–1291 (HLNGSSSSSSSSRS) show a composition bias toward low complexity. Asparagine 1280 carries an N-linked (GlcNAc...) asparagine glycan. The segment covering 1338-1350 (EFPKRKLPGDRAT) has biased composition (basic and acidic residues). Asparagine 1417, asparagine 1597, and asparagine 1665 each carry an N-linked (GlcNAc...) asparagine glycan. One can recognise a VWFD domain in the interval 1579–1756 (ARCSVSYNKI…SWILEEAPCR (178 aa)). 2 cysteine pairs are disulfide-bonded: cysteine 1581-cysteine 1719 and cysteine 1604-cysteine 1755.

Phosvitin, an egg yolk storage protein, is one of the most highly phosphorylated (10%) proteins in nature. In terms of processing, cathepsin D is responsible for intraoocytic processing of vitellogenin. Post-translationally, may contain intrachain disulfide bonds. After incorporation from serum via a specific receptor, it is cleaved into four fragments, heavy and light chain lipovitellins, phosphovitin and YGP40, and YGP40 is released into the yolk plasma before or during compartmentation of lipovitellin-phosvitin complex into the yolk granule.

Its function is as follows. Precursor of the major egg-yolk proteins that are sources of nutrients during early development of oviparous organisms. In terms of biological role, phosvitin is believed to be of importance in sequestering calcium, iron and other cations for the developing embryo. This chain is Vitellogenin-2 (VTG2), found in Gallus gallus (Chicken).